The following is a 132-amino-acid chain: Ribonuclease P protein component (132 aa).

Belongs to the RnpA family. As to quaternary structure, consists of a catalytic RNA component (M1 or rnpB) and a protein subunit.

The catalysed reaction is Endonucleolytic cleavage of RNA, removing 5'-extranucleotides from tRNA precursor.. In terms of biological role, RNaseP catalyzes the removal of the 5'-leader sequence from pre-tRNA to produce the mature 5'-terminus. It can also cleave other RNA substrates such as 4.5S RNA. The protein component plays an auxiliary but essential role in vivo by binding to the 5'-leader sequence and broadening the substrate specificity of the ribozyme. This is Ribonuclease P protein component from Micrococcus luteus (strain ATCC 4698 / DSM 20030 / JCM 1464 / CCM 169 / CCUG 5858 / IAM 1056 / NBRC 3333 / NCIMB 9278 / NCTC 2665 / VKM Ac-2230) (Micrococcus lysodeikticus).